The chain runs to 386 residues: L-lactate oxidase (386 aa).

In terms of domain architecture, FMN hydroxy acid dehydrogenase spans 16–382 (AQAPFPICFA…RTITLVKNDG (367 aa)). Tyr42 provides a ligand contact to pyruvate. FMN contacts are provided by residues 95 to 97 (PVG), Ser124, and Gln146. Residue Tyr148 participates in pyruvate binding. An FMN-binding site is contributed by Thr174. A pyruvate-binding site is contributed by Arg183. Lys253 and Ser275 together coordinate FMN. Pyruvate is bound by residues His277 and Arg280. His277 (proton acceptor) is an active-site residue. FMN-binding positions include 308-312 (DSGVY) and Arg332.

This sequence belongs to the FMN-dependent alpha-hydroxy acid dehydrogenase family. In terms of assembly, homotetramer. FMN is required as a cofactor.

The catalysed reaction is a (2S)-2-hydroxycarboxylate + O2 = a 2-oxocarboxylate + H2O2. It carries out the reaction (S)-lactate + O2 = pyruvate + H2O2. It catalyses the reaction 2-hydroxyoctanoate + O2 = 2-oxooctanoate + H2O2. The enzyme catalyses mandelate + O2 = phenylglyoxylate + H2O2. The catalysed reaction is 2-hydroxyoctadecanoate + O2 = 2-oxooctadecanoate + H2O2. It carries out the reaction (S)-2-hydroxyglutarate + O2 = H2O2 + 2-oxoglutarate. Functionally, oxidase that catalyzes the oxidation of a broad range of 2-hydroxyacids in vitro, such as (S)-lactate, 2-hydroxyoctanoate, mandelate, 2-hydroxyoctadecanoate and (S)-2-hydroxyglutarate, to the corresponding 2-oxoacids, with a reduction of O2 to H2O2. May be involved in the utilization of L-lactate as an energy source for growth. The chain is L-lactate oxidase from Lysinibacillus sphaericus (strain C3-41).